The sequence spans 378 residues: tRNA-specific 2-thiouridylase MnmA (378 aa).

ATP contacts are provided by residues 9–16 (GVSGGVDS) and Met35. The tract at residues 94–96 (NPD) is interaction with target base in tRNA. Cys99 (nucleophile) is an active-site residue. The cysteines at positions 99 and 195 are disulfide-linked. Gly123 is a binding site for ATP. Positions 145-147 (KDQ) are interaction with tRNA. Cys195 (cysteine persulfide intermediate) is an active-site residue. The segment at 307 to 308 (RY) is interaction with tRNA.

This sequence belongs to the MnmA/TRMU family.

The protein localises to the cytoplasm. It carries out the reaction S-sulfanyl-L-cysteinyl-[protein] + uridine(34) in tRNA + AH2 + ATP = 2-thiouridine(34) in tRNA + L-cysteinyl-[protein] + A + AMP + diphosphate + H(+). Functionally, catalyzes the 2-thiolation of uridine at the wobble position (U34) of tRNA, leading to the formation of s(2)U34. This chain is tRNA-specific 2-thiouridylase MnmA, found in Xanthomonas euvesicatoria pv. vesicatoria (strain 85-10) (Xanthomonas campestris pv. vesicatoria).